Reading from the N-terminus, the 391-residue chain is Pyruvate dehydrogenase E1 component subunit alpha, mitochondrial (391 aa).

The N-terminal 26 residues, 1–26, are a transit peptide targeting the mitochondrion; the sequence is MALSTSRAINHIMKPLSAAVCATRRL. Pyruvate-binding residues include His92, Tyr118, Arg119, Gly167, Val169, Asp198, Gly199, Ala200, Asn227, and Tyr229. Thiamine diphosphate contacts are provided by Tyr118, Arg119, Gly167, Val169, Asp198, Gly199, Ala200, and Asn227. Residue Asp198 participates in Mg(2+) binding. Mg(2+)-binding residues include Asn227 and Tyr229. His293 serves as a coordination point for thiamine diphosphate. The segment at 294-313 is disordered; the sequence is SMSDPGSTYRTRDEISGVRQ. The segment covering 303 to 313 has biased composition (basic and acidic residues); it reads RTRDEISGVRQ.

Tetramer of 2 alpha and 2 beta subunits. Thiamine diphosphate is required as a cofactor. It depends on Mg(2+) as a cofactor.

The protein resides in the mitochondrion matrix. It catalyses the reaction N(6)-[(R)-lipoyl]-L-lysyl-[protein] + pyruvate + H(+) = N(6)-[(R)-S(8)-acetyldihydrolipoyl]-L-lysyl-[protein] + CO2. E1 activity is regulated by phosphorylation (inactivation) and dephosphorylation (activation) of the alpha subunit. Functionally, the pyruvate dehydrogenase complex catalyzes the overall conversion of pyruvate to acetyl-CoA and CO(2). It contains multiple copies of three enzymatic components: pyruvate dehydrogenase (E1), dihydrolipoamide acetyltransferase (E2) and lipoamide dehydrogenase (E3). In Solanum tuberosum (Potato), this protein is Pyruvate dehydrogenase E1 component subunit alpha, mitochondrial.